Here is a 273-residue protein sequence, read N- to C-terminus: DnaJ homolog subfamily C member 27 (273 aa).

GTP-binding positions include 23–30 (GNAEVGKS), 71–75 (DMAGH), and 134–137 (NKID). The region spanning 217–273 (DSWDMLGVKPGATRDEVNKAYRKLAVLLHPDKCVAPGSEDAFKAVVNARTALLKNIK) is the J domain.

It belongs to the small GTPase superfamily. Rab family.

The protein resides in the nucleus. GTPase possibly involved in regulation of the MEK/ERK pathway. In Gallus gallus (Chicken), this protein is DnaJ homolog subfamily C member 27 (DNAJC27).